A 252-amino-acid chain; its full sequence is ATP synthase subunit a (252 aa).

A run of 6 helical transmembrane segments spans residues 29–49 (FTNVSLFTVVTVVITAAFLFI), 87–107 (FFPLVFSLFTFILVANFIGLF), 117–137 (IMITFSLAMVVILTVIGYGFY), 146–166 (LFVPSGVPVVVLPLVTMIEII), 196–216 (FIVSMIGVGIVGVGGAVLPLI), and 219–239 (VAITALEFLVAFLQAYVFTVL).

It belongs to the ATPase A chain family. F-type ATPases have 2 components, CF(1) - the catalytic core - and CF(0) - the membrane proton channel. CF(1) has five subunits: alpha(3), beta(3), gamma(1), delta(1), epsilon(1). CF(0) has three main subunits: a(1), b(2) and c(9-12). The alpha and beta chains form an alternating ring which encloses part of the gamma chain. CF(1) is attached to CF(0) by a central stalk formed by the gamma and epsilon chains, while a peripheral stalk is formed by the delta and b chains.

Its subcellular location is the cell inner membrane. Functionally, key component of the proton channel; it plays a direct role in the translocation of protons across the membrane. The chain is ATP synthase subunit a from Bartonella tribocorum (strain CIP 105476 / IBS 506).